The sequence spans 116 residues: Spexin (116 aa).

Positions 1–26 are cleaved as a signal peptide; the sequence is MKGPSILAVAALALLLVLSVLENSSG. A propeptide spanning residues 27–35 is cleaved from the precursor; it reads APQRLSEKR. Glutamine 49 carries the post-translational modification Glutamine amide. Propeptides lie at residues 50–116 and 74–116; these read GHRF…RFYW and PNLQ…RFYW. Residues 56-73 are compositionally biased toward basic and acidic residues; it reads DQSRRKELADRPPPERRN. The disordered stretch occupies residues 56–75; that stretch reads DQSRRKELADRPPPERRNPN.

This sequence belongs to the spexin family. In terms of tissue distribution, widely expressed; predominantly expressed in epithelial cells in the skin, respiratory, digestive, urinary and reproductive systems, retina, adrenal gland and various brain regions. In the adrenal gland, expressed in parenchymal cells of the cortex and in ganglionic cells and intermingled cortical cells of the medulla. Expressed in the type I glomic cells within the carotid body (at protein level). Widely expressed. Strongly expressed in esophagus, liver, pancreas, kidney, brain, hypothalamus, thyroid and ovary. Expressed in the zona glomerulosa (ZG) and zona fasciculata/reticularis (ZF/R) of the adrenal gland. Also expressed in stomach, lung, skeletal muscle, heart, uterus, spleen, adrenal gland and testis. Weakly expressed in small intestine, thymus, urinary bladder and adenohypophysis. In the brain, is expressed in the Barrington's nucleus, with lesser amount in the ventrolateral caudal periaqueductal gray (PAG) and in the mesopontine tegmentum.

It localises to the secreted. The protein localises to the extracellular space. The protein resides in the cytoplasmic vesicle. It is found in the secretory vesicle. Functionally, plays a role as a central modulator of cardiovascular and renal function and nociception. Also plays a role in energy metabolism and storage. Inhibits adrenocortical cell proliferation with minor stimulation on corticosteroid release. In terms of biological role, acts as a ligand for galanin receptors GALR2 and GALR3. Intracerebroventricular administration of the peptide induces an increase in arterial blood pressure, a decrease in both heart rate and renal excretion and delayed natriuresis. Intraventricular administration of the peptide induces antinociceptive activity. Intraperitoneal administration of the peptide induces a reduction in food consumption and body weight. Inhibits long chain fatty acid uptake into adipocytes. Also induces contraction of muscarinic-like stomach smooth muscles. Its function is as follows. Intracerebroventricular administration of the peptide induces a decrease in heart rate, but no change in arterial pressure, and an increase in urine flow rate. Intraventricular administration of the peptide induces antinociceptive activity. The polypeptide is Spexin (SPX) (Rattus norvegicus (Rat)).